The primary structure comprises 456 residues: Acyl-CoA transferase FPSE_08120 (456 aa).

The transit peptide at 1 to 33 directs the protein to the mitochondrion; that stretch reads MARLLFSGQRLRPSFLRSYIRANPSSTPSATRA.

It belongs to the CoA-transferase III family.

Its subcellular location is the mitochondrion. Its function is as follows. Acyl-CoA transferase; part of the Fusarium detoxification of benzoxazolinone cluster involved in the degradation of benzoxazolinones produced by the host plant. Maize, wheat, and rye produce the 2 benzoxazinone phytoanticipins 2,4-dihy-droxy-7-methoxy-1,4-benzoxazin-3-one (DIMBOA) and 2,4-dihydroxy-1,4-benzoxazin-3-one (DIBOA) that, due to their inherent instability once released, spontaneously degrade to the more stable corresponding benzoxazolinones, 6-methoxy-2-benzoxazolinone (MBOA) and 2-benzoxazolinone (BOA), respectively. The first step in the detoxification of benzoxazolinones involves the hydrolysis of the cyclic ester bond of benzoxazolinones by the gamma-lactamase FDB1 to aminophenols. FDB1 is able to convert 2-benzoxazolinone (BOA) into 2-aminophenol (2-AP), as well as 6-methoxy-2-benzoxazolinone (MBOA) into 5-methoxy-2-aminophenol (2-AMP). The N-malonyltransferase FDB2 then metabolizes aminophenols via N-malonylation to non-toxic malonamic acids. FDB2 converts 2-AP into N-(2-hydroxyphenyl) malonamic acid (HPMA) and 2-AMP into N-(2-hydroxy-4-methoxyphenyl) malonamic acid (HMPMA). The cluster also contains 2 transcription factors (FDB3 and FPSE_08121), an aldo-keto reductase (FPSE_08125) that possibly associates with a ketone component of BOA and MBOA degradation, an esterase (FPSE_08126), an acyl-CoA transferase (FPSE_08120), a solute carrier protein (FPSE_08119) and a transmembrane transporter (FPSE_08127) proposed to shuttle metabolites of benzoxazolinone degradation. This chain is Acyl-CoA transferase FPSE_08120, found in Fusarium pseudograminearum (strain CS3096) (Wheat and barley crown-rot fungus).